Here is a 430-residue protein sequence, read N- to C-terminus: Serine/threonine transporter SstT (430 aa).

9 helical membrane passes run isoleucine 24–isoleucine 44, phenylalanine 47–valine 67, phenylalanine 82–leucine 102, alanine 144–methionine 164, valine 186–valine 206, leucine 223–phenylalanine 243, isoleucine 294–methionine 314, leucine 320–alanine 340, and phenylalanine 361–isoleucine 381.

The protein belongs to the dicarboxylate/amino acid:cation symporter (DAACS) (TC 2.A.23) family.

The protein localises to the cell membrane. The catalysed reaction is L-serine(in) + Na(+)(in) = L-serine(out) + Na(+)(out). It catalyses the reaction L-threonine(in) + Na(+)(in) = L-threonine(out) + Na(+)(out). Its function is as follows. Involved in the import of serine and threonine into the cell, with the concomitant import of sodium (symport system). This chain is Serine/threonine transporter SstT, found in Bifidobacterium adolescentis (strain ATCC 15703 / DSM 20083 / NCTC 11814 / E194a).